The primary structure comprises 260 residues: CD40 ligand (260 aa).

At 1-22 (MIETYSQTAPRSVATGPPVSMK) the chain is on the cytoplasmic side. The chain crosses the membrane as a helical; Signal-anchor for type II membrane protein span at residues 23 to 46 (IFMYLLTVFLITQMIGSALFAVYL). Over 47–260 (HRRLDKIEDE…GFTSFGLLKL (214 aa)) the chain is Extracellular. Residues 121 to 260 (IAAHVISEAS…GFTSFGLLKL (140 aa)) form the THD domain. C177 and C217 are disulfide-bonded. A glycan (N-linked (GlcNAc...) asparagine) is linked at N239.

It belongs to the tumor necrosis factor family. Homotrimer. Interacts with CD28. CD40 ligand, soluble form: Exists as either a monomer or a homotrimer. Forms a ternary complex between CD40 and integrins for CD40-CD40LG signaling. The soluble form derives from the membrane form by proteolytic processing.

The protein localises to the cell membrane. Its subcellular location is the cell surface. It localises to the secreted. Functionally, cytokine that acts as a ligand to CD40/TNFRSF5. Costimulates T-cell proliferation and cytokine production. Its cross-linking on T-cells generates a costimulatory signal which enhances the production of IL4 and IL10 in conjunction with the TCR/CD3 ligation and CD28 costimulation. Induces the activation of NF-kappa-B. Induces the activation of kinases MAPK8 and PAK2 in T-cells. Mediates B-cell proliferation in the absence of co-stimulus as well as IgE production in the presence of IL4. Involved in immunoglobulin class switching. Its function is as follows. Acts as a ligand for integrins, specifically ITGA5:ITGB1 and ITGAV:ITGB3; both integrins and the CD40 receptor are required for activation of CD40-CD40LG signaling, which have cell-type dependent effects, such as B-cell activation, NF-kappa-B signaling and anti-apoptotic signaling. This chain is CD40 ligand (CD40LG), found in Canis lupus familiaris (Dog).